Here is a 171-residue protein sequence, read N- to C-terminus: Co-chaperone protein HscB homolog (171 aa).

Residues 2–74 (NYFELFGLPI…LRRAEYLLSL (73 aa)) form the J domain.

Belongs to the HscB family. As to quaternary structure, interacts with HscA and stimulates its ATPase activity.

In terms of biological role, co-chaperone involved in the maturation of iron-sulfur cluster-containing proteins. Seems to help targeting proteins to be folded toward HscA. The polypeptide is Co-chaperone protein HscB homolog (Vibrio cholerae serotype O1 (strain ATCC 39541 / Classical Ogawa 395 / O395)).